Consider the following 602-residue polypeptide: Elongation factor 4 (602 aa).

Residues 7–188 enclose the tr-type G domain; sequence ENIRNFSIIA…AIVELIPPPK (182 aa). GTP contacts are provided by residues 19 to 24 and 135 to 138; these read DHGKST and NKID.

This sequence belongs to the TRAFAC class translation factor GTPase superfamily. Classic translation factor GTPase family. LepA subfamily.

The protein resides in the cell inner membrane. The catalysed reaction is GTP + H2O = GDP + phosphate + H(+). Its function is as follows. Required for accurate and efficient protein synthesis under certain stress conditions. May act as a fidelity factor of the translation reaction, by catalyzing a one-codon backward translocation of tRNAs on improperly translocated ribosomes. Back-translocation proceeds from a post-translocation (POST) complex to a pre-translocation (PRE) complex, thus giving elongation factor G a second chance to translocate the tRNAs correctly. Binds to ribosomes in a GTP-dependent manner. The sequence is that of Elongation factor 4 from Chlamydia abortus (strain DSM 27085 / S26/3) (Chlamydophila abortus).